A 182-amino-acid polypeptide reads, in one-letter code: MSRIGKKPIDIPSGVEVKIDGNVITVKGPKGSLTKEIHPEMIVKIENNQILVQRPSDERHHKALHGLTRTLIANMVAGVTKGYEKVLEIVGIGYRAQKQGKKLILNVGYSHPVEIEEPAGITIEVPDQNRIVVKGIDKQQVGNFAANIRKVREPDPYLGKGIKYADEVLRLKEGKAGKGGKK.

This sequence belongs to the universal ribosomal protein uL6 family. As to quaternary structure, part of the 50S ribosomal subunit.

Its function is as follows. This protein binds to the 23S rRNA, and is important in its secondary structure. It is located near the subunit interface in the base of the L7/L12 stalk, and near the tRNA binding site of the peptidyltransferase center. The chain is Large ribosomal subunit protein uL6 from Caldicellulosiruptor saccharolyticus (strain ATCC 43494 / DSM 8903 / Tp8T 6331).